We begin with the raw amino-acid sequence, 358 residues long: Purine permease 2 (358 aa).

Helical transmembrane passes span 6–26, 37–57, 74–94, 110–130, 134–154, 170–190, 209–229, 262–282, 288–308, and 312–332; these read VLVI…PLMM, IWFP…PLLL, FFLM…LVGF, TASL…FFMV, FTPF…VLAL, VVGF…LPLV, FQMV…LAAG, VIVF…GLIF, VSGI…VICF, and FQAG…SYFY. Positions 46-154 constitute an EamA domain; the sequence is VGCPLIFFPL…LTGGAVVLAL (109 aa).

This sequence belongs to the purine permeases (TC 2.A.7.14) family. Expressed in the vascular system of leaves. Restricted to the phloem. Expressed in flowers and roots and not detected in stems.

Its subcellular location is the membrane. With respect to regulation, competitive inhibition of adenine transport by isopentenyladenine, kinetin, benzylaminopurine, trans- and cis-zeatin and trans-zeatin riboside. Functionally, mediates adenine transport. May be involved in the uptake of cytokinin analogs. The polypeptide is Purine permease 2 (PUP2) (Arabidopsis thaliana (Mouse-ear cress)).